A 251-amino-acid polypeptide reads, in one-letter code: ATP synthase subunit a (251 aa).

The next 6 membrane-spanning stretches (helical) occupy residues 30–50 (NSNE…VVAL), 86–106 (FFPF…LGLF), 116–136 (IAIT…VGFW), 145–165 (FFSP…IEIV), 195–215 (FMLM…IIPL), and 219–239 (IALT…FAIL).

This sequence belongs to the ATPase A chain family. F-type ATPases have 2 components, CF(1) - the catalytic core - and CF(0) - the membrane proton channel. CF(1) has five subunits: alpha(3), beta(3), gamma(1), delta(1), epsilon(1). CF(0) has three main subunits: a(1), b(2) and c(9-12). The alpha and beta chains form an alternating ring which encloses part of the gamma chain. CF(1) is attached to CF(0) by a central stalk formed by the gamma and epsilon chains, while a peripheral stalk is formed by the delta and b chains.

The protein resides in the cell inner membrane. Functionally, key component of the proton channel; it plays a direct role in the translocation of protons across the membrane. The polypeptide is ATP synthase subunit a (Acidiphilium cryptum (strain JF-5)).